Reading from the N-terminus, the 133-residue chain is NADH dehydrogenase [ubiquinone] 1 alpha subcomplex subunit 6 (133 aa).

Belongs to the complex I LYR family. In terms of assembly, complex I is composed of at least 49 different subunits.

Its subcellular location is the mitochondrion inner membrane. In terms of biological role, accessory subunit of the mitochondrial membrane respiratory chain NADH dehydrogenase (Complex I), that is believed to be not involved in catalysis. Complex I functions in the transfer of electrons from NADH to the respiratory chain. The immediate electron acceptor for the enzyme is believed to be ubiquinone. The polypeptide is NADH dehydrogenase [ubiquinone] 1 alpha subcomplex subunit 6 (Arabidopsis thaliana (Mouse-ear cress)).